The primary structure comprises 798 residues: PR domain zinc finger protein 4 (798 aa).

The SET domain occupies Lys408–Ser525. 5 C2H2-type zinc fingers span residues Trp586–His608, His614–His636, Tyr642–His664, Leu670–His692, and Ile698–His720. Residues Tyr726–Ala747 form a C2H2-type 6; degenerate zinc finger. The interval Glu750–Lys798 is disordered. The segment covering Gln758–Glu769 has biased composition (acidic residues).

It belongs to the class V-like SAM-binding methyltransferase superfamily.

The protein localises to the nucleus. Its function is as follows. May function as a transcription factor involved in cell differentiation. This Rattus norvegicus (Rat) protein is PR domain zinc finger protein 4 (Prdm4).